Consider the following 281-residue polypeptide: Tumor necrosis factor ligand superfamily member 6 (281 aa).

Topologically, residues 1 to 80 (MQQPFNYPYP…LKKRGNHSTG (80 aa)) are cytoplasmic. The disordered stretch occupies residues 20–71 (SSPWAPPGTVLPCPTSVPRRPGQRRPPPPPPPPPLPPPPPPPPLPPLPLPPL). Residues 43 to 70 (RRPPPPPPPPPLPPPPPPPPLPPLPLPP) show a composition bias toward pro residues. The chain crosses the membrane as a helical; Signal-anchor for type II membrane protein span at residues 81 to 102 (LCLLVMFFMVLVALVGLGLGMF). At 103 to 281 (QLFHLQKELA…SQTFFGLYKL (179 aa)) the chain is on the extracellular side. Over residues 118-128 (TSQMHTASSLE) the composition is skewed to polar residues. The interval 118–142 (TSQMHTASSLEKQIGHPSPPPEKKE) is disordered. One can recognise a THD domain in the interval 145 to 281 (KVAHLTGKSN…SQTFFGLYKL (137 aa)). The N-linked (GlcNAc...) asparagine glycan is linked to asparagine 184. An intrachain disulfide couples cysteine 202 to cysteine 233. Asparagine 250 and asparagine 260 each carry an N-linked (GlcNAc...) asparagine glycan.

It belongs to the tumor necrosis factor family. As to quaternary structure, homotrimer. Interacts with ARHGAP9, BAIAP2L1, BTK, CACNB3, CACNB4, CRK, DLG2, DNMBP, DOCK4, EPS8L3, FGR, FYB1, FYN, HCK, ITK, ITSN2, KALRN, LYN, MACC1, MIA, MPP4, MYO15A, NCF1, NCK1, NCK2, NCKIPSD, OSTF1, PIK3R1, PSTPIP1, RIMBP3C, SAMSN1, SH3GL3, SH3PXD2B, SH3PXD2A, SH3RF2, SKAP2, SNX33, SNX9, SORBS3, SPTA1, SRC, SRGAP1, SRGAP2, SRGAP3, TEC, TJP3 and YES1. In terms of processing, the soluble form derives from the membrane form by proteolytic processing. The membrane-bound form undergoes two successive intramembrane proteolytic cleavages. The first one is processed by ADAM10 producing an N-terminal fragment, which lacks the receptor-binding extracellular domain. This ADAM10-processed FasL (FasL APL) remnant form is still membrane anchored and further processed by SPPL2A that liberates the FasL intracellular domain (FasL ICD). FasL shedding by ADAM10 is a prerequisite for subsequent intramembrane cleavage by SPPL2A in T-cells. Post-translationally, N-glycosylated. Glycosylation enhances apoptotic activity. Phosphorylated by FGR on tyrosine residues; this is required for ubiquitination and subsequent internalization. In terms of processing, monoubiquitinated.

It localises to the cell membrane. It is found in the cytoplasmic vesicle lumen. Its subcellular location is the lysosome lumen. The protein localises to the secreted. The protein resides in the nucleus. Cytokine that binds to TNFRSF6/FAS, a receptor that transduces the apoptotic signal into cells. Involved in cytotoxic T-cell-mediated apoptosis, natural killer cell-mediated apoptosis and in T-cell development. Initiates fratricidal/suicidal activation-induced cell death (AICD) in antigen-activated T-cells contributing to the termination of immune responses. TNFRSF6/FAS-mediated apoptosis also has a role in the induction of peripheral tolerance. Binds to TNFRSF6B/DcR3, a decoy receptor that blocks apoptosis. In terms of biological role, induces FAS-mediated activation of NF-kappa-B, initiating non-apoptotic signaling pathways. Can induce apoptosis but does not appear to be essential for this process. Functionally, cytoplasmic form induces gene transcription inhibition. This is Tumor necrosis factor ligand superfamily member 6 (FASLG) from Homo sapiens (Human).